Consider the following 281-residue polypeptide: Tumor necrosis factor ligand superfamily member 6 (281 aa).

At 1–80 (MQQPFNYPYP…LKKRGNHSTG (80 aa)) the chain is on the cytoplasmic side. The tract at residues 20–71 (SSPWAPPGTVLPCPTSVPRRPGQRRPPPPPPPPPLPPPPPPPPLPPLPLPPL) is disordered. Pro residues predominate over residues 43–70 (RRPPPPPPPPPLPPPPPPPPLPPLPLPP). Residues 81 to 102 (LCLLVMFFMVLVALVGLGLGMF) traverse the membrane as a helical; Signal-anchor for type II membrane protein segment. Residues 103–281 (QLFHLQKELA…SQTFFGLYKL (179 aa)) are Extracellular-facing. Residues 118 to 128 (TSQMHTASSLE) show a composition bias toward polar residues. The tract at residues 118-142 (TSQMHTASSLEKQIGHPSPPPEKKE) is disordered. A THD domain is found at 145–281 (KVAHLTGKSN…SQTFFGLYKL (137 aa)). Asn-184 carries an N-linked (GlcNAc...) asparagine glycan. Cys-202 and Cys-233 form a disulfide bridge. N-linked (GlcNAc...) asparagine glycans are attached at residues Asn-250 and Asn-260.

Belongs to the tumor necrosis factor family. Homotrimer. Interacts with ARHGAP9, BAIAP2L1, BTK, CACNB3, CACNB4, CRK, DLG2, DNMBP, DOCK4, EPS8L3, FGR, FYB1, FYN, HCK, ITK, ITSN2, KALRN, LYN, MACC1, MIA, MPP4, MYO15A, NCF1, NCK1, NCK2, NCKIPSD, OSTF1, PIK3R1, PSTPIP1, RIMBP3C, SAMSN1, SH3GL3, SH3PXD2B, SH3PXD2A, SH3RF2, SKAP2, SNX33, SNX9, SORBS3, SPTA1, SRC, SRGAP1, SRGAP2, SRGAP3, TEC, TJP3 and YES1. The soluble form derives from the membrane form by proteolytic processing. The membrane-bound form undergoes two successive intramembrane proteolytic cleavages. The first one is processed by ADAM10 producing an N-terminal fragment, which lacks the receptor-binding extracellular domain. This ADAM10-processed FasL (FasL APL) remnant form is still membrane anchored and further processed by SPPL2A that liberates the FasL intracellular domain (FasL ICD). FasL shedding by ADAM10 is a prerequisite for subsequent intramembrane cleavage by SPPL2A in T-cells. In terms of processing, N-glycosylated. Glycosylation enhances apoptotic activity. Post-translationally, phosphorylated by FGR on tyrosine residues; this is required for ubiquitination and subsequent internalization. Monoubiquitinated.

It is found in the cell membrane. It localises to the cytoplasmic vesicle lumen. The protein localises to the lysosome lumen. Its subcellular location is the secreted. The protein resides in the nucleus. Cytokine that binds to TNFRSF6/FAS, a receptor that transduces the apoptotic signal into cells. Involved in cytotoxic T-cell-mediated apoptosis, natural killer cell-mediated apoptosis and in T-cell development. Initiates fratricidal/suicidal activation-induced cell death (AICD) in antigen-activated T-cells contributing to the termination of immune responses. TNFRSF6/FAS-mediated apoptosis also has a role in the induction of peripheral tolerance. Binds to TNFRSF6B/DcR3, a decoy receptor that blocks apoptosis. Its function is as follows. Induces FAS-mediated activation of NF-kappa-B, initiating non-apoptotic signaling pathways. Can induce apoptosis but does not appear to be essential for this process. In terms of biological role, cytoplasmic form induces gene transcription inhibition. The protein is Tumor necrosis factor ligand superfamily member 6 (FASLG) of Homo sapiens (Human).